We begin with the raw amino-acid sequence, 376 residues long: Deoxyguanosinetriphosphate triphosphohydrolase-like protein (376 aa).

Residues 1–32 (MEPSFAPYAAHSSQTRGRVHREAPAAPRSEFQ) are disordered. Residues 65–196 (RLTHSIEVAQ…ANLADEIAYN (132 aa)) form the HD domain.

The protein belongs to the dGTPase family. Type 2 subfamily.

The chain is Deoxyguanosinetriphosphate triphosphohydrolase-like protein from Thiobacillus denitrificans (strain ATCC 25259 / T1).